Here is a 91-residue protein sequence, read N- to C-terminus: Small ribosomal subunit protein bS16 (91 aa).

This sequence belongs to the bacterial ribosomal protein bS16 family.

The sequence is that of Small ribosomal subunit protein bS16 from Ruthia magnifica subsp. Calyptogena magnifica.